Here is a 444-residue protein sequence, read N- to C-terminus: Tubulin beta-6 chain (444 aa).

Residues glutamine 11, glutamate 69, serine 138, glycine 142, threonine 143, glycine 144, asparagine 204, and asparagine 226 each contribute to the GTP site. Residue glutamate 69 participates in Mg(2+) binding.

It belongs to the tubulin family. Dimer of alpha and beta chains. A typical microtubule is a hollow water-filled tube with an outer diameter of 25 nm and an inner diameter of 15 nM. Alpha-beta heterodimers associate head-to-tail to form protofilaments running lengthwise along the microtubule wall with the beta-tubulin subunit facing the microtubule plus end conferring a structural polarity. Microtubules usually have 13 protofilaments but different protofilament numbers can be found in some organisms and specialized cells. It depends on Mg(2+) as a cofactor. Expressed in roots, leaf sheaths, anthers, and suspension cultured cells.

The protein resides in the cytoplasm. It localises to the cytoskeleton. Functionally, tubulin is the major constituent of microtubules, a cylinder consisting of laterally associated linear protofilaments composed of alpha- and beta-tubulin heterodimers. Microtubules grow by the addition of GTP-tubulin dimers to the microtubule end, where a stabilizing cap forms. Below the cap, tubulin dimers are in GDP-bound state, owing to GTPase activity of alpha-tubulin. In Oryza sativa subsp. japonica (Rice), this protein is Tubulin beta-6 chain (TUBB6).